A 398-amino-acid chain; its full sequence is Phosphoglycerate kinase (398 aa).

Substrate is bound by residues 23–25 (DFN), Arg38, 61–64 (HMGK), Arg122, and Arg155. Residues Lys206, Gly297, Glu328, and 354–357 (GGDS) each bind ATP.

Belongs to the phosphoglycerate kinase family. In terms of assembly, monomer.

It is found in the cytoplasm. The enzyme catalyses (2R)-3-phosphoglycerate + ATP = (2R)-3-phospho-glyceroyl phosphate + ADP. It participates in carbohydrate degradation; glycolysis; pyruvate from D-glyceraldehyde 3-phosphate: step 2/5. The sequence is that of Phosphoglycerate kinase from Clostridium botulinum (strain Kyoto / Type A2).